We begin with the raw amino-acid sequence, 275 residues long: Fructose permease IID component (275 aa).

Residues 5–274 (KRLTKKEIFS…GILGYWAGFL (270 aa)) form the PTS EIID domain. 5 helical membrane passes run 100 to 120 (MKIGLMGPIAGVGDPIFWGTI), 127 to 147 (LGASLALGGNIAGPLLFFFLL), 187 to 207 (ILGLFVMGALVSKWTTINIPI), 227 to 247 (VLDSIMPGALPLGLTLLVAWM), and 255 to 275 (LLIICGIFVIGILGYWAGFLA).

It is found in the cell membrane. The phosphoenolpyruvate-dependent sugar phosphotransferase system (PTS), a major carbohydrate active -transport system, catalyzes the phosphorylation of incoming sugar substrates concomitant with their translocation across the cell membrane. This system is involved in fructose transport. This chain is Fructose permease IID component (levG), found in Bacillus subtilis (strain 168).